A 483-amino-acid polypeptide reads, in one-letter code: Acetyl-coenzyme A carboxylase carboxyl transferase subunit beta, chloroplastic (483 aa).

The CoA carboxyltransferase N-terminal domain occupies 219–483 (LWVQCENCYG…LHTFFPLNQN (265 aa)). Zn(2+) is bound by residues C223, C226, C242, and C245. The C4-type zinc-finger motif lies at 223-245 (CENCYGLNYKKFFKSKMNLCEQC).

This sequence belongs to the AccD/PCCB family. As to quaternary structure, acetyl-CoA carboxylase is a heterohexamer composed of biotin carboxyl carrier protein, biotin carboxylase and 2 subunits each of ACCase subunit alpha and ACCase plastid-coded subunit beta (accD). It depends on Zn(2+) as a cofactor.

It is found in the plastid. It localises to the chloroplast stroma. It catalyses the reaction N(6)-carboxybiotinyl-L-lysyl-[protein] + acetyl-CoA = N(6)-biotinyl-L-lysyl-[protein] + malonyl-CoA. It functions in the pathway lipid metabolism; malonyl-CoA biosynthesis; malonyl-CoA from acetyl-CoA: step 1/1. In terms of biological role, component of the acetyl coenzyme A carboxylase (ACC) complex. Biotin carboxylase (BC) catalyzes the carboxylation of biotin on its carrier protein (BCCP) and then the CO(2) group is transferred by the transcarboxylase to acetyl-CoA to form malonyl-CoA. This is Acetyl-coenzyme A carboxylase carboxyl transferase subunit beta, chloroplastic from Guizotia abyssinica (Niger).